The chain runs to 308 residues: PHO85 cyclin-2 (308 aa).

The Cyclin N-terminal domain maps to Glu18–Thr146. The disordered stretch occupies residues Ser248–Lys270. Over residues Asp255–Arg264 the composition is skewed to basic and acidic residues.

Belongs to the cyclin family. PCL1,2 subfamily. Forms a cyclin-CDK complex with PHO85. Interacts with RVS167.

The protein resides in the cytoplasm. Its subcellular location is the nucleus. Functionally, G1/S-specific cyclin partner of the cyclin-dependent kinase (CDK) PHO85. Essential for the control of the cell cycle at the G1/S (start) transition. Together with cyclin PCL1, positively controls degradation of sphingoid long chain base kinase LCB4. The PCL2-PHO85 cyclin-CDK holoenzyme phosphorylates LCB4, which is required for its ubiquitination and degradation. PCL2-PHO85 also phosphorylates RVS167, linking cyclin-CDK activity with organization of the actin cytoskeleton. This is PHO85 cyclin-2 (PCL2) from Saccharomyces cerevisiae (strain ATCC 204508 / S288c) (Baker's yeast).